Reading from the N-terminus, the 151-residue chain is Large ribosomal subunit protein uL13 (151 aa).

It belongs to the universal ribosomal protein uL13 family. In terms of assembly, part of the 50S ribosomal subunit.

In terms of biological role, this protein is one of the early assembly proteins of the 50S ribosomal subunit, although it is not seen to bind rRNA by itself. It is important during the early stages of 50S assembly. The chain is Large ribosomal subunit protein uL13 from Rippkaea orientalis (strain PCC 8801 / RF-1) (Cyanothece sp. (strain PCC 8801)).